The chain runs to 131 residues: Large ribosomal subunit protein bL17 (131 aa).

Belongs to the bacterial ribosomal protein bL17 family. In terms of assembly, part of the 50S ribosomal subunit. Contacts protein L32.

This Shewanella baltica (strain OS223) protein is Large ribosomal subunit protein bL17.